Reading from the N-terminus, the 291-residue chain is Undecaprenyl-diphosphatase (291 aa).

The next 8 membrane-spanning stretches (helical) occupy residues Met-1 to Phe-21, Ser-48 to Phe-68, Leu-102 to Ile-122, Leu-126 to Ala-146, Ile-162 to Phe-182, Ser-203 to Leu-223, Ile-231 to Ala-251, and Phe-267 to Ile-287.

This sequence belongs to the UppP family.

Its subcellular location is the cell membrane. The enzyme catalyses di-trans,octa-cis-undecaprenyl diphosphate + H2O = di-trans,octa-cis-undecaprenyl phosphate + phosphate + H(+). Functionally, catalyzes the dephosphorylation of undecaprenyl diphosphate (UPP). Confers resistance to bacitracin. The sequence is that of Undecaprenyl-diphosphatase from Staphylococcus aureus (strain USA300).